An 837-amino-acid chain; its full sequence is Tuftelin-interacting protein 11 (837 aa).

Basic and acidic residues-rich tracts occupy residues 1–13 (MSLS…GEGR) and 53–64 (VWAERDSDDERP). Disordered regions lie at residues 1–21 (MSLS…DDER), 53–72 (VWAE…KRAR), and 85–133 (LKKG…KGFA). Residues 1 to 50 (MSLSHLYRDGEGRIDDDDDERENFEITDWDLQNEFNPNRQRHWQTKEEAT) form a required for interaction with DHX15 region. A phosphoserine mark is found at Ser-2, Ser-59, and Ser-98. Positions 91 to 102 (EEAELEDSDDEE) are enriched in acidic residues. Residues 103–116 (RPVKQDDFPKDFGP) show a composition bias toward basic and acidic residues. Ser-144 is modified (phosphoserine). One can recognise a G-patch domain in the interval 149–195 (TKGIGQKLLQKMGYVPGRGLGKNAQGIINPIEAKQRKGKGAVGAYGS). The disordered stretch occupies residues 179–236 (IEAKQRKGKGAVGAYGSERTTQSMQDFPVVDSEEEAEEEFQKELSQWRKDPSGSKKKP). Ser-210 is subject to Phosphoserine. Over residues 217 to 231 (EFQKELSQWRKDPSG) the composition is skewed to basic and acidic residues. Residues 700–705 (VKDKFN) carry the Nuclear localization signal motif. Residues 710 to 734 (IMNRAVSSNVGAYMQPGARENIAYL) form a required for nuclear speckle localization region.

Belongs to the TFP11/STIP family. As to quaternary structure, identified in the spliceosome C complex. Found in the Intron Large (IL) complex, a post-mRNA release spliceosomal complex containing the excised intron, U2, U5 and U6 snRNPs, and splicing factors. Interacts with TUFT1. Interacts with DHX15; indicative for a recruitment of DHX15 to the IL complex. Interacts with GCFC2.

It is found in the cytoplasm. It localises to the nucleus. Its function is as follows. Involved in pre-mRNA splicing, specifically in spliceosome disassembly during late-stage splicing events. Intron turnover seems to proceed through reactions in two lariat-intron associated complexes termed Intron Large (IL) and Intron Small (IS). In cooperation with DHX15 seems to mediate the transition of the U2, U5 and U6 snRNP-containing IL complex to the snRNP-free IS complex leading to efficient debranching and turnover of excised introns. May play a role in the differentiation of ameloblasts and odontoblasts or in the forming of the enamel extracellular matrix. This chain is Tuftelin-interacting protein 11 (TFIP11), found in Macaca mulatta (Rhesus macaque).